Reading from the N-terminus, the 618-residue chain is Glutamine--fructose-6-phosphate aminotransferase [isomerizing] (618 aa).

C2 (nucleophile; for GATase activity) is an active-site residue. Residues 2-226 enclose the Glutamine amidotransferase type-2 domain; sequence CGIVGYAGRN…DFETAVLTPD (225 aa). A disordered region spans residues 72 to 91; that stretch reads WATHGRPSTENAHPHNSGGN. 2 consecutive SIS domains span residues 295–434 and 467–608; these read NDDE…VRGK and CAEN…IDKP. Catalysis depends on K613, which acts as the For Fru-6P isomerization activity.

In terms of assembly, homodimer.

The protein resides in the cytoplasm. It catalyses the reaction D-fructose 6-phosphate + L-glutamine = D-glucosamine 6-phosphate + L-glutamate. Its function is as follows. Catalyzes the first step in hexosamine metabolism, converting fructose-6P into glucosamine-6P using glutamine as a nitrogen source. In Methanosarcina mazei (strain ATCC BAA-159 / DSM 3647 / Goe1 / Go1 / JCM 11833 / OCM 88) (Methanosarcina frisia), this protein is Glutamine--fructose-6-phosphate aminotransferase [isomerizing].